We begin with the raw amino-acid sequence, 180 residues long: Large ribosomal subunit protein uL6 (180 aa).

Belongs to the universal ribosomal protein uL6 family. In terms of assembly, part of the 50S ribosomal subunit.

Functionally, this protein binds to the 23S rRNA, and is important in its secondary structure. It is located near the subunit interface in the base of the L7/L12 stalk, and near the tRNA binding site of the peptidyltransferase center. The protein is Large ribosomal subunit protein uL6 of Salinispora tropica (strain ATCC BAA-916 / DSM 44818 / JCM 13857 / NBRC 105044 / CNB-440).